The primary structure comprises 210 residues: Glutathione S-transferase P (210 aa).

A GST N-terminal domain is found at P2–G81. Y4 is modified (phosphotyrosine; by EGFR). Glutathione contacts are provided by residues Y8, R14, W39, K45, and Q52–L53. T62 bears the Phosphothreonine mark. Q65–S66 is a binding site for glutathione. Residues D83–I204 enclose the GST C-terminal domain. An N6-succinyllysine mark is found at K103 and K116. N6-acetyllysine is present on K128.

Belongs to the GST superfamily. Pi family. Homodimer. Interacts with CDK5.

It is found in the cytoplasm. It localises to the mitochondrion. The protein resides in the nucleus. It catalyses the reaction RX + glutathione = an S-substituted glutathione + a halide anion + H(+). The enzyme catalyses prostaglandin J2 + glutathione = prostaglandin J2-S-(R)-glutathione. The catalysed reaction is prostaglandin J2 + glutathione = prostaglandin J2-S-(S)-glutathione. It carries out the reaction prostaglandin A2 + glutathione = prostaglandin A2-S-(S)-glutathione. It catalyses the reaction 11(S)-hydroxy-14(S),15(S)-epoxy-(5Z,8Z,12E)-eicosatrienoate + glutathione = (11S,15S)-dihydroxy-14(R)-S-glutathionyl-(5Z,8Z,12E)-eicosatrienoate. In terms of biological role, conjugation of reduced glutathione to a wide number of exogenous and endogenous hydrophobic electrophiles. Involved in the formation of glutathione conjugates of both prostaglandin A2 (PGA2) and prostaglandin J2 (PGJ2). Participates in the formation of novel hepoxilin regioisomers. Negatively regulates CDK5 activity via p25/p35 translocation to prevent neurodegeneration. This is Glutathione S-transferase P (GSTP1) from Cricetulus longicaudatus (Long-tailed dwarf hamster).